The following is a 462-amino-acid chain: MKPRILVLGDVMIDHYLFGKCDRISPEAPVQVVDVQKEELVLGGAGNVVNNLLAFGAEVGIISVVGEDANGIWLEQRFQEKGVQTYLLKENRPTTKKSRIIASNQQIVRVDREEKKEIESLTQQKILNVFDRVIKEYDLVLLSDYDKGVLTKEVTQTVIQRSSVPVFVDPKNDFEKYRGATLIKPNKKEASKAVGFLIKNEEDLKRAGWKLKKELDLQSLIVTLSEEGMAIFEEEMMRIPTVAKEVYDVTGAGDTVLAALGYAVAKGKNLKEAAVFANLAAGVVVGKVGAATATLEEIEEYERSIRKAPTEEFIKDFEEIELISKDLHKRGKRIVFTNGCFDILHLGHVKYLQKAKELGDVLIVGVNSDASVKRLKGDDRPINPQFDRAYLLASLEAVDYVVIFEEDTPYELIKIVKPDILVKGGDYKGKEVVGSDIAKEVRLIDFVEGKSTTAIVERMRSC.

The ribokinase stretch occupies residues 1 to 309 (MKPRILVLGD…EYERSIRKAP (309 aa)). Residue 186-189 (NKKE) participates in ATP binding. Residue Asp-254 is part of the active site. The cytidylyltransferase stretch occupies residues 336-462 (FTNGCFDILH…TAIVERMRSC (127 aa)).

This sequence in the N-terminal section; belongs to the carbohydrate kinase PfkB family. The protein in the C-terminal section; belongs to the cytidylyltransferase family. In terms of assembly, homodimer.

The enzyme catalyses D-glycero-beta-D-manno-heptose 7-phosphate + ATP = D-glycero-beta-D-manno-heptose 1,7-bisphosphate + ADP + H(+). The catalysed reaction is D-glycero-beta-D-manno-heptose 1-phosphate + ATP + H(+) = ADP-D-glycero-beta-D-manno-heptose + diphosphate. The protein operates within nucleotide-sugar biosynthesis; ADP-L-glycero-beta-D-manno-heptose biosynthesis; ADP-L-glycero-beta-D-manno-heptose from D-glycero-beta-D-manno-heptose 7-phosphate: step 1/4. It functions in the pathway nucleotide-sugar biosynthesis; ADP-L-glycero-beta-D-manno-heptose biosynthesis; ADP-L-glycero-beta-D-manno-heptose from D-glycero-beta-D-manno-heptose 7-phosphate: step 3/4. In terms of biological role, catalyzes the phosphorylation of D-glycero-D-manno-heptose 7-phosphate at the C-1 position to selectively form D-glycero-beta-D-manno-heptose-1,7-bisphosphate. Its function is as follows. Catalyzes the ADP transfer from ATP to D-glycero-beta-D-manno-heptose 1-phosphate, yielding ADP-D-glycero-beta-D-manno-heptose. In Nitratiruptor sp. (strain SB155-2), this protein is Bifunctional protein HldE.